The sequence spans 3326 residues: Protein unc-80 homolog (3326 aa).

Over residues 152 to 164 (IENQGSPGQPCRS) the composition is skewed to polar residues. 4 disordered regions span residues 152–178 (IENQ…RKTF), 243–267 (KRSS…QQGE), 283–317 (PKAT…RASL), and 450–469 (RKED…GKRR). S257 is subject to Phosphoserine. Positions 283–308 (PKATISGCHQGNSFDGSLSSQTSQER) are enriched in polar residues. S526 is subject to Phosphoserine. Disordered regions lie at residues 536-560 (LSAR…SHGE), 697-785 (RKKS…DNIP), 967-1076 (GKKV…SRRI), 1405-1430 (EDSK…KKVP), and 1469-1516 (SSKL…LSNA). Composition is skewed to basic and acidic residues over residues 551 to 560 (LPDHSNSHGE) and 699 to 713 (KSEN…KRPS). The span at 723 to 737 (SSSSTSGFGAPSASG) shows a compositional bias: low complexity. Residues 738 to 770 (AGDGGGEEGGGGDGGGGGGGGDGGGGGGGGGGP) are compositionally biased toward gly residues. Basic and acidic residues predominate over residues 772 to 783 (EKNEKNQEKDDN). Over residues 1038-1055 (SQSAASDTSSQSEQDTSE) the composition is skewed to low complexity. Positions 1418–1429 (IKSDAGAEEKKV) are enriched in basic and acidic residues. The next 2 helical transmembrane spans lie at 2336–2356 (PFVL…DAAN) and 2466–2486 (IAAT…VEVL). Residues 2493 to 2515 (PQMSRSDQGHKGTTTANHTMSSG) are disordered. 2 helical membrane passes run 2853–2873 (GLAE…LVCF) and 2899–2919 (LALW…FVLL). Polar residues predominate over residues 3010-3032 (NTGTGTVWEQDSEPSQQASQDTL). A disordered region spans residues 3010 to 3052 (NTGTGTVWEQDSEPSQQASQDTLSRTDEEDEENDSVSMPSVVS). Position 3110 is a phosphoserine (S3110). 3 disordered regions span residues 3122-3222 (LQQP…VLTS), 3236-3271 (PKQS…LSDP), and 3296-3326 (NGTE…ESHV). A compositionally biased stretch (basic residues) spans 3127-3136 (GRKRGLRQLR). Positions 3157-3168 (LSTTRRSIQPKT) are enriched in polar residues. Positions 3298 to 3309 (TENPLLSSQFTF) are enriched in polar residues. A compositionally biased stretch (acidic residues) spans 3315-3326 (GDTDSALDESHV).

The protein belongs to the unc-80 family. As to quaternary structure, NALCN complex consists of NALCN and auxiliary subunits, UNC79, UNC80 and NACL1. These auxiliary subunits are essential for the NALCN complex function. Interacts (via N-terminus half) with NALCN; this interaction facilitates NALCN surface localization. Interacts (via C-terminus) with UNC79. UNC80 bridges NALCN to UNC79. In terms of processing, phosphorylated on tyrosine residues. Expressed almost exclusively in the brain. Expressed in hippocampus and ventral tegmental area neurons.

It is found in the cell membrane. Its subcellular location is the cell projection. It localises to the dendrite. Functionally, auxiliary subunit of the NALCN sodium channel complex. The NALCN sodium channel complex is a voltage-gated ion channel responsible for the resting Na(+) permeability that controls neuronal excitability. This complex is activated by neuropeptides substance P, neurotensin. In addition, the channel is inhibited by extracellular Ca(2+) through the Ca(2+)-sensing receptor. UNC80 is essential for NALCN sensitivity to extracellular calcium. This chain is Protein unc-80 homolog (Unc80), found in Mus musculus (Mouse).